A 428-amino-acid polypeptide reads, in one-letter code: Glutamate-1-semialdehyde 2,1-aminomutase 1 (428 aa).

Lys268 is subject to N6-(pyridoxal phosphate)lysine.

The protein belongs to the class-III pyridoxal-phosphate-dependent aminotransferase family. HemL subfamily. Homodimer. The cofactor is pyridoxal 5'-phosphate.

It localises to the cytoplasm. The catalysed reaction is (S)-4-amino-5-oxopentanoate = 5-aminolevulinate. The protein operates within porphyrin-containing compound metabolism; protoporphyrin-IX biosynthesis; 5-aminolevulinate from L-glutamyl-tRNA(Glu): step 2/2. The protein is Glutamate-1-semialdehyde 2,1-aminomutase 1 of Geobacillus kaustophilus (strain HTA426).